The chain runs to 298 residues: Lipoyl synthase (298 aa).

[4Fe-4S] cluster contacts are provided by Cys40, Cys45, Cys51, Cys67, Cys71, Cys74, and Ser280. The region spanning 53-269 is the Radical SAM core domain; sequence AVRKTATFMI…KEIALSKGFS (217 aa).

The protein belongs to the radical SAM superfamily. Lipoyl synthase family. [4Fe-4S] cluster serves as cofactor.

The protein localises to the cytoplasm. The enzyme catalyses [[Fe-S] cluster scaffold protein carrying a second [4Fe-4S](2+) cluster] + N(6)-octanoyl-L-lysyl-[protein] + 2 oxidized [2Fe-2S]-[ferredoxin] + 2 S-adenosyl-L-methionine + 4 H(+) = [[Fe-S] cluster scaffold protein] + N(6)-[(R)-dihydrolipoyl]-L-lysyl-[protein] + 4 Fe(3+) + 2 hydrogen sulfide + 2 5'-deoxyadenosine + 2 L-methionine + 2 reduced [2Fe-2S]-[ferredoxin]. It functions in the pathway protein modification; protein lipoylation via endogenous pathway; protein N(6)-(lipoyl)lysine from octanoyl-[acyl-carrier-protein]. In terms of biological role, catalyzes the radical-mediated insertion of two sulfur atoms into the C-6 and C-8 positions of the octanoyl moiety bound to the lipoyl domains of lipoate-dependent enzymes, thereby converting the octanoylated domains into lipoylated derivatives. This chain is Lipoyl synthase, found in Bacillus cereus (strain ATCC 10987 / NRS 248).